The sequence spans 327 residues: 2-methoxy-6-polyprenyl-1,4-benzoquinol methylase, mitochondrial (327 aa).

A mitochondrion-targeting transit peptide spans 1–49; it reads MAAPRSCALWSYCGRGWSWAMRGCQLLGLRSSWPGAPLSARLLPQEKRA. S-adenosyl-L-methionine-binding positions include threonine 117, aspartate 171, and 199-200; that span reads DA.

This sequence belongs to the class I-like SAM-binding methyltransferase superfamily. MenG/UbiE family. In terms of assembly, component of a multi-subunit COQ enzyme complex, composed of at least COQ3, COQ4, COQ5, COQ6, COQ7 and COQ9. Interacts with PYURF; the interaction is direct, stabilizes COQ5 protein and associates PYURF with COQ enzyme complex.

It localises to the mitochondrion inner membrane. The catalysed reaction is 2-methoxy-6-(all-trans-decaprenyl)benzene-1,4-diol + S-adenosyl-L-methionine = 5-methoxy-2-methyl-3-(all-trans-decaprenyl)benzene-1,4-diol + S-adenosyl-L-homocysteine + H(+). Its pathway is cofactor biosynthesis; ubiquinone biosynthesis. Functionally, methyltransferase required for the conversion of 2-decaprenyl-6-methoxy-1,4-benzoquinol (DDMQH2) to 2-decaprenyl-3-methyl-6-methoxy-1,4-benzoquinol (DMQH2). The polypeptide is 2-methoxy-6-polyprenyl-1,4-benzoquinol methylase, mitochondrial (Pongo abelii (Sumatran orangutan)).